The chain runs to 162 residues: Large ribosomal subunit protein uL10 (162 aa).

It belongs to the universal ribosomal protein uL10 family. Part of the ribosomal stalk of the 50S ribosomal subunit. The N-terminus interacts with L11 and the large rRNA to form the base of the stalk. The C-terminus forms an elongated spine to which L12 dimers bind in a sequential fashion forming a multimeric L10(L12)X complex.

Forms part of the ribosomal stalk, playing a central role in the interaction of the ribosome with GTP-bound translation factors. The protein is Large ribosomal subunit protein uL10 of Aliarcobacter butzleri (strain RM4018) (Arcobacter butzleri).